The following is a 125-amino-acid chain: Holo-[acyl-carrier-protein] synthase (125 aa).

Mg(2+) contacts are provided by Asp8 and Glu57.

Belongs to the P-Pant transferase superfamily. AcpS family. Mg(2+) serves as cofactor.

The protein localises to the cytoplasm. The enzyme catalyses apo-[ACP] + CoA = holo-[ACP] + adenosine 3',5'-bisphosphate + H(+). Transfers the 4'-phosphopantetheine moiety from coenzyme A to a Ser of acyl-carrier-protein. This is Holo-[acyl-carrier-protein] synthase from Neisseria meningitidis serogroup C (strain 053442).